A 131-amino-acid polypeptide reads, in one-letter code: Phosphoribosyl-AMP cyclohydrolase (131 aa).

Asp78 is a binding site for Mg(2+). Residue Cys79 coordinates Zn(2+). Mg(2+)-binding residues include Asp80 and Asp82. Residues Cys96 and Cys103 each coordinate Zn(2+).

Belongs to the PRA-CH family. In terms of assembly, homodimer. Mg(2+) is required as a cofactor. Zn(2+) serves as cofactor.

It localises to the cytoplasm. It carries out the reaction 1-(5-phospho-beta-D-ribosyl)-5'-AMP + H2O = 1-(5-phospho-beta-D-ribosyl)-5-[(5-phospho-beta-D-ribosylamino)methylideneamino]imidazole-4-carboxamide. It functions in the pathway amino-acid biosynthesis; L-histidine biosynthesis; L-histidine from 5-phospho-alpha-D-ribose 1-diphosphate: step 3/9. In terms of biological role, catalyzes the hydrolysis of the adenine ring of phosphoribosyl-AMP. The sequence is that of Phosphoribosyl-AMP cyclohydrolase from Neisseria gonorrhoeae (strain ATCC 700825 / FA 1090).